The chain runs to 196 residues: MLSSLSPYMANPRQTFTQVLNFALVLSTAFMLWKGLSVYTNSASPIVVVLSGSMEPAFQRGDLLFLWNRSPRVDVGEIVVYNVRGKDIPIVHRVMRTFPDVPGKDKTKKGGKQDVEASPSSLESQKLLTKGDNNLSDDTELYARGQDYLDRKEDIVGSVRGYIPAVGYVTIMLSEHPWLKSVLLGFMGLMVILQRE.

Residues 1-14 are Cytoplasmic-facing; that stretch reads MLSSLSPYMANPRQ. The chain crosses the membrane as a helical; Signal-anchor for type II membrane protein span at residues 15-33; it reads TFTQVLNFALVLSTAFMLW. The Lumenal segment spans residues 34–196; it reads KGLSVYTNSA…MGLMVILQRE (163 aa). Residues serine 53 and histidine 92 each act as charge relay system in the active site. Positions 101 to 133 are disordered; it reads VPGKDKTKKGGKQDVEASPSSLESQKLLTKGDN. Residues 118–133 are compositionally biased toward polar residues; sequence SPSSLESQKLLTKGDN. The N-linked (GlcNAc...) asparagine glycan is linked to asparagine 134. Aspartate 138 (charge relay system) is an active-site residue. A C-terminal short (CTS) helix region spans residues 182 to 193; that stretch reads VLLGFMGLMVIL.

It belongs to the peptidase S26B family. Component of the signal peptidase complex (SPC) composed of a catalytic subunit SEC11 and three accessory subunits SPC1, SPC2 and SPC3. The complex induces a local thinning of the ER membrane which is used to measure the length of the signal peptide (SP) h-region of protein substrates. This ensures the selectivity of the complex towards h-regions shorter than 18-20 amino acids. SPC associates with the translocon complex.

It localises to the endoplasmic reticulum membrane. It catalyses the reaction Cleavage of hydrophobic, N-terminal signal or leader sequences from secreted and periplasmic proteins.. In terms of biological role, catalytic component of the signal peptidase complex (SPC) which catalyzes the cleavage of N-terminal signal sequences from nascent proteins as they are translocated into the lumen of the endoplasmic reticulum. Specifically cleaves N-terminal signal peptides that contain a hydrophobic alpha-helix (h-region) shorter than 18-20 amino acids. In Blastomyces gilchristii (strain SLH14081) (Blastomyces dermatitidis), this protein is Signal peptidase complex catalytic subunit SEC11 (SEC11).